Reading from the N-terminus, the 1037-residue chain is MEEQVANAIEIASNPSADPALKTQAFEFVNQLRSDPSGWQVCLSLFTQTPQRSGIVRHVALEVVNSAAQGGLIDLQALAYVKDGLLAYLRQVYGQDAGASDPPNIQNKIAQTITFLFSALYASGWESFFDDLLSLTHKSPSSTTRDNASGIIFYLRVINSIHDEIGDVLVSRSRNEQDKANALKDLIRQRDMQKITSSWQQILSEWRDGNDVIVEMCLKAVGSWVSWIDIGLVVNQTMLDLLFQQLGRAQKEDLRQGEEKVRDAAVDVFTEIIGKKMKPEDKIDMIIFLNLDTIVSQLSNSPPLHGNRFTFKYDTDLAETVAKLVNITVIDIVRALEQEGVSAECKEKANGLLQAFLPHILRYFSDEYDEVCSTVIPCVSDLLTYLRRIAKVNPALASQHSSILLPILKAIIAKMRYDETSSWGEEDEQTDEAEFQELRKRLGILQQMIASVNEQLYMEAVSEMVATTFENLRQSGSQMDWRDLDLALHEMFLFGDLAVKAGSLYTKSNPNNQAAERLIEMMLRMVESDIRSFTHPATQLQYMEICVRYSSFFHHHTHLIPGVLENFLQLVHHPIKKVKTRSWYLFQRLVKQLRQYVGNVAQTVVEALGDLLVIRAELPSEVSEGDEMSSEDHDLADAIFNSQLYLFEAVGIICSTPTVSPDKQVLYAQAVLNPIFLDMEKNLEAAKSQDERAILQIHHDIMALGTLARGFSDWMPGTNTPATLPAPEVSAAFNQVAEATLVALESLKSSFNVRTAARFAFSRLIGVLGSRILPQLPRWIDGLLTQTSSRDEMALFLRLLDQVIFGFKGEIYSILDTLLTPFLQRVFSGIADPTTGTDDEIQLAELKREYLNFLLAVLNNDLGAVIISERNQPIFETVISTIEHFSKDIDDFTTAKMAFSVLSKMSSSWGGPDVIAEASNGAPLAQAPLPGFGQFMITRFSPLCWALPSTPSFNSKDAQAKQVLAEAGGLQRTIYAKTGMEYLTYLRDRELPGMGMGAELIEEFVGALSRLDLKGFRQFFPVCLSNFHHSLDLNMNN.

This sequence belongs to the exportin family.

It localises to the nucleus. It is found in the cytoplasm. Its function is as follows. tRNA nucleus export receptor which facilitates tRNA translocation across the nuclear pore complex. Involved in pre-tRNA splicing, probably by affecting the interaction of pre-tRNA with splicing endonuclease. The protein is Exportin-T (los1) of Neosartorya fischeri (strain ATCC 1020 / DSM 3700 / CBS 544.65 / FGSC A1164 / JCM 1740 / NRRL 181 / WB 181) (Aspergillus fischerianus).